The chain runs to 218 residues: DNA-directed RNA polymerase III subunit RPC7-like (218 aa).

The segment at 130–218 is disordered; sequence TIILPKRPPK…SDDNMDEAIY (89 aa). The span at 139–160 shows a compositional bias: basic and acidic residues; it reads KSTDDKEETIQKLETLEKKEEE. 2 stretches are compositionally biased toward acidic residues: residues 161-193 and 201-218; these read VTSE…EETD and NGED…EAIY.

This sequence belongs to the eukaryotic RPC7 RNA polymerase subunit family. In terms of assembly, component of the RNA polymerase III (Pol III) complex consisting of 17 subunits. Pol III exists as two alternative complexes defined by the mutually exclusive incorporation of subunit POLR3G/RPC7alpha or POLR3GL/RPC7beta. Found in a trimeric complex with POLR3C/RPC3 and POLR3F/RPC6. Directly interacts with POLR3C. In terms of tissue distribution, expressed in the liver.

It is found in the nucleus. Functionally, DNA-dependent RNA polymerase catalyzes the transcription of DNA into RNA using the four ribonucleoside triphosphates as substrates. Specific peripheric component of RNA polymerase III which synthesizes small RNAs, such as 5S rRNA and tRNAs. The chain is DNA-directed RNA polymerase III subunit RPC7-like from Mus musculus (Mouse).